The chain runs to 259 residues: MSTSIIVTGAGGRMGSTICRMAQEDPVLTLAAVVERPERLASLDVWKCPSGSDPDAVFATVPGGVVVDFTSPEASMANARAAARAGVSHVIGTTGLTAEQKAELADLARTARIFWAPNMSIGVNVLLKILPQLVQQLGEQYDLEMVELHHNRKKDSPSGTALRLAECLAEARGWNLPDVANYHREGIIGERPKDEIGIQTIRGGDVVGVHTIYAMGPGERIEITHQAHSRENFAQGALRAAKWLPQQQPGTLYSMLDML.

NAD(+)-binding positions include 9–14 and E35; that span reads GAGGRM. R36 contributes to the NADP(+) binding site. Residues 92–94 and 116–119 contribute to the NAD(+) site; these read GTT and APNM. H149 acts as the Proton donor/acceptor in catalysis. H150 is a binding site for (S)-2,3,4,5-tetrahydrodipicolinate. K153 serves as the catalytic Proton donor. 159-160 is a (S)-2,3,4,5-tetrahydrodipicolinate binding site; the sequence is GT.

The protein belongs to the DapB family.

The protein localises to the cytoplasm. The catalysed reaction is (S)-2,3,4,5-tetrahydrodipicolinate + NAD(+) + H2O = (2S,4S)-4-hydroxy-2,3,4,5-tetrahydrodipicolinate + NADH + H(+). The enzyme catalyses (S)-2,3,4,5-tetrahydrodipicolinate + NADP(+) + H2O = (2S,4S)-4-hydroxy-2,3,4,5-tetrahydrodipicolinate + NADPH + H(+). The protein operates within amino-acid biosynthesis; L-lysine biosynthesis via DAP pathway; (S)-tetrahydrodipicolinate from L-aspartate: step 4/4. Functionally, catalyzes the conversion of 4-hydroxy-tetrahydrodipicolinate (HTPA) to tetrahydrodipicolinate. The protein is 4-hydroxy-tetrahydrodipicolinate reductase of Nitratidesulfovibrio vulgaris (strain DSM 19637 / Miyazaki F) (Desulfovibrio vulgaris).